The primary structure comprises 184 residues: CDP-archaeol synthase (184 aa).

5 helical membrane-spanning segments follow: residues 4–24 (IIMV…NPGA), 54–74 (FIGG…IIYI), 86–106 (IISA…GDIT), 122–142 (GSLL…FIFA), and 145–165 (FFLE…LTPP).

The protein belongs to the CDP-archaeol synthase family. Mg(2+) is required as a cofactor.

It localises to the cell membrane. The enzyme catalyses 2,3-bis-O-(geranylgeranyl)-sn-glycerol 1-phosphate + CTP + H(+) = CDP-2,3-bis-O-(geranylgeranyl)-sn-glycerol + diphosphate. It functions in the pathway membrane lipid metabolism; glycerophospholipid metabolism. Catalyzes the formation of CDP-2,3-bis-(O-geranylgeranyl)-sn-glycerol (CDP-archaeol) from 2,3-bis-(O-geranylgeranyl)-sn-glycerol 1-phosphate (DGGGP) and CTP. This reaction is the third ether-bond-formation step in the biosynthesis of archaeal membrane lipids. The protein is CDP-archaeol synthase of Picrophilus torridus (strain ATCC 700027 / DSM 9790 / JCM 10055 / NBRC 100828 / KAW 2/3).